The chain runs to 247 residues: HTH-type transcriptional regulator SarU (247 aa).

2 consecutive DNA-binding regions (H-T-H motif) follow at residues 53–76 (LKEI…SLSK) and 178–201 (LKDL…RLNN).

This sequence belongs to the SarA family.

Its subcellular location is the cytoplasm. Positive regulator of RNAII and RNAIII in a cell density-dependent manner. It can contribute to the expression of virulence genes controlled by agr. May also regulate target genes via an agr-independent pathway. This is HTH-type transcriptional regulator SarU (sarU) from Staphylococcus aureus (strain NCTC 8325 / PS 47).